The primary structure comprises 228 residues: MKSIFVAGTDTDVGKTYITAGLAVALRKMNVDVGVMKPFAAGTAQKKGFKSEDVEILAKAAQVADPENLINPQFFPIPASPYTAWKNLKTKPKVSTILSSFKKLSKLHEMILVEGMGGIMTPILKDYYITNLIKEMKIPSVIVTRSKVGTVNHTIMTIQMCQKYKIPIKGIIINDFDDDGYPIKNLKRDLESLTGVKVLGSIPFIKDMSNASLNRIFKKNIDLKSLLK.

12–17 (DVGKTY) contacts ATP. Thr16 provides a ligand contact to Mg(2+). Lys37 is a catalytic residue. Residues Asp53, 114–117 (EGMG), 174–175 (ND), 203–205 (PFI), and Asn210 contribute to the ATP site. Positions 53 and 114 each coordinate Mg(2+).

The protein belongs to the dethiobiotin synthetase family. Homodimer. Mg(2+) is required as a cofactor.

The protein localises to the cytoplasm. It catalyses the reaction (7R,8S)-7,8-diammoniononanoate + CO2 + ATP = (4R,5S)-dethiobiotin + ADP + phosphate + 3 H(+). The protein operates within cofactor biosynthesis; biotin biosynthesis; biotin from 7,8-diaminononanoate: step 1/2. Catalyzes a mechanistically unusual reaction, the ATP-dependent insertion of CO2 between the N7 and N8 nitrogen atoms of 7,8-diaminopelargonic acid (DAPA, also called 7,8-diammoniononanoate) to form a ureido ring. This Nitrosopumilus maritimus (strain SCM1) protein is ATP-dependent dethiobiotin synthetase BioD.